The chain runs to 289 residues: Ribosomal RNA small subunit methyltransferase I (289 aa).

The protein belongs to the methyltransferase superfamily. RsmI family.

It is found in the cytoplasm. The enzyme catalyses cytidine(1402) in 16S rRNA + S-adenosyl-L-methionine = 2'-O-methylcytidine(1402) in 16S rRNA + S-adenosyl-L-homocysteine + H(+). Its function is as follows. Catalyzes the 2'-O-methylation of the ribose of cytidine 1402 (C1402) in 16S rRNA. The sequence is that of Ribosomal RNA small subunit methyltransferase I from Halalkalibacterium halodurans (strain ATCC BAA-125 / DSM 18197 / FERM 7344 / JCM 9153 / C-125) (Bacillus halodurans).